Here is a 201-residue protein sequence, read N- to C-terminus: Ras-related protein Rab-1C (201 aa).

Positions Met-1–Phe-20 are disordered. Gly-2 carries the N-myristoyl glycine lipid modification. Residue Cys-3 is the site of S-palmitoyl cysteine attachment. Residues Gly-40–Cys-48, Phe-58–Thr-65, Asp-88–Gln-92, Asn-146–Asp-149, and Ser-176–Lys-178 each bind GTP. The Effector region signature appears at Tyr-62 to Phe-70.

This sequence belongs to the small GTPase superfamily. Rab family. In terms of processing, although this sequence lacks the C-terminal cysteine motifs subject to isoprenylation in other Rab proteins, it does have N-terminal myristoylation and S-palmitoylation sequence motifs.

In Dictyostelium discoideum (Social amoeba), this protein is Ras-related protein Rab-1C (Rab1C).